Reading from the N-terminus, the 472-residue chain is ESX-3 secretion system protein EccD3 (472 aa).

The next 11 membrane-spanning stretches (helical) occupy residues 121–141 (WGIA…ALLA), 155–175 (LAGL…GLLI), 183–203 (GIAL…LAVP), 211–231 (VLLG…IPSA), 236–256 (VVAF…AAGA), 258–278 (LLWQ…ALLV), 327–347 (QSGF…AIAV), 349–369 (PEAL…AATL), 381–401 (AWLL…YTAT), 405–425 (VAAF…VVVA), and 450–470 (GLDV…AWVL).

The protein belongs to the EccD/Snm4 family. Part of the ESX-3 / type VII secretion system (T7SS), which is composed of cytosolic and membrane components. The ESX-3 membrane complex is composed of EccB3, EccC3, EccD3 and EccE3.

The protein localises to the cell inner membrane. Functionally, part of the ESX-3 specialized secretion system, which is important for iron and zinc uptake or homeostasis. The chain is ESX-3 secretion system protein EccD3 from Mycobacterium tuberculosis (strain CDC 1551 / Oshkosh).